Consider the following 273-residue polypeptide: Dermonecrotic toxin (273 aa).

The Mg(2+) site is built by Glu20 and Asp22. His35 serves as the catalytic Nucleophile. Residues Cys39 and Cys45 are joined by a disulfide bond. Asp79 is a binding site for Mg(2+).

It belongs to the arthropod phospholipase D family. Class I subfamily. Requires Mg(2+) as cofactor. In terms of tissue distribution, expressed by the venom gland.

The protein localises to the secreted. It carries out the reaction an N-(acyl)-sphingosylphosphocholine = an N-(acyl)-sphingosyl-1,3-cyclic phosphate + choline. It catalyses the reaction an N-(acyl)-sphingosylphosphoethanolamine = an N-(acyl)-sphingosyl-1,3-cyclic phosphate + ethanolamine. The enzyme catalyses a 1-acyl-sn-glycero-3-phosphocholine = a 1-acyl-sn-glycero-2,3-cyclic phosphate + choline. The catalysed reaction is a 1-acyl-sn-glycero-3-phosphoethanolamine = a 1-acyl-sn-glycero-2,3-cyclic phosphate + ethanolamine. Functionally, dermonecrotic toxins cleave the phosphodiester linkage between the phosphate and headgroup of certain phospholipids (sphingolipid and lysolipid substrates), forming an alcohol (often choline) and a cyclic phosphate. This toxin acts on sphingomyelin (SM). It may also act on ceramide phosphoethanolamine (CPE), lysophosphatidylcholine (LPC) and lysophosphatidylethanolamine (LPE), but not on lysophosphatidylserine (LPS), and lysophosphatidylglycerol (LPG). It acts by transphosphatidylation, releasing exclusively cyclic phosphate products as second products. Induces dermonecrosis, hemolysis, increased vascular permeability, edema, inflammatory response, and platelet aggregation. The protein is Dermonecrotic toxin of Loxosceles laeta (South American recluse spider).